A 119-amino-acid polypeptide reads, in one-letter code: Cysteine-rich DPF motif domain-containing protein 1 (119 aa).

This sequence belongs to the CDPF1 family.

This is Cysteine-rich DPF motif domain-containing protein 1 (Cdpf1) from Mus musculus (Mouse).